Reading from the N-terminus, the 587-residue chain is Inorganic phosphate transporter PHO84 (587 aa).

Over 1–67 (MSSVNKDTIH…FGWQQVKTIS (67 aa)) the chain is Extracellular. Lys6 participates in a covalent cross-link: Glycyl lysine isopeptide (Lys-Gly) (interchain with G-Cter in ubiquitin). A helical transmembrane segment spans residues 68–88 (IAGVGFLTDSYDIFAINLGIT). Over 89–108 (MMSYVYWHGSMPGPSQTLLK) the chain is Cytoplasmic. Residues 109 to 129 (VSTSVGTVIGQFGFGTLADIV) traverse the membrane as a helical segment. The Extracellular portion of the chain corresponds to 130-133 (GRKR). The chain crosses the membrane as a helical span at residues 134-154 (IYGMELIIMIVCTILQTTVAH). Residues 155–156 (SP) lie on the Cytoplasmic side of the membrane. Residues 157–177 (AINFVAVLTFYRIVMGIGIGG) form a helical membrane-spanning segment. Residues 178–201 (DYPLSSIITSEFATTKWRGAIMGA) lie on the Extracellular side of the membrane. The chain crosses the membrane as a helical span at residues 202 to 222 (VFANQAWGQISGGIIALILVA). Topologically, residues 223–250 (AYKGELEYANSGAECDARCQKACDQMWR) are cytoplasmic. Residues 251-271 (ILIGLGTVLGLACLYFRLTIP) form a helical membrane-spanning segment. Topologically, residues 272 to 345 (ESPRYQLDVN…RHFGQWKYGK (74 aa)) are extracellular. Lys298 is covalently cross-linked (Glycyl lysine isopeptide (Lys-Gly) (interchain with G-Cter in ubiquitin)). At Thr302 the chain carries Phosphothreonine. Ser303 and Ser316 each carry phosphoserine. At Thr317 the chain carries Phosphothreonine. Ser321 carries the phosphoserine modification. Residues 346–366 (ILLGTAGSWFTLDVAFYGLSL) traverse the membrane as a helical segment. Residues 367-395 (NSAVILQTIGYAGSKNVYKKLYDTAVGNL) lie on the Cytoplasmic side of the membrane. The helical transmembrane segment at 396–416 (ILICAGSLPGYWVSVFTVDII) threads the bilayer. Residues 417–419 (GRK) lie on the Extracellular side of the membrane. A helical membrane pass occupies residues 420–440 (PIQLAGFIILTALFCVIGFAY). Over 441–442 (HK) the chain is Cytoplasmic. A helical membrane pass occupies residues 443 to 463 (LGDHGLLALYVICQFFQNFGP). Residues 464 to 485 (NTTTFIVPGECFPTRYRSTAHG) are Extracellular-facing. The chain crosses the membrane as a helical span at residues 486–506 (ISAASGKVGAIIAQTALGTLI). Residues 507–522 (DHNCARDGKPTNCWLP) lie on the Cytoplasmic side of the membrane. A helical membrane pass occupies residues 523–543 (HVMEIFALFMLLGIFTTLLIP). Topologically, residues 544–587 (ETKRKTLEEINELYHDEIDPATLNFRNKNNDIESSSPSQLQHEA) are extracellular. A disordered region spans residues 568–587 (FRNKNNDIESSSPSQLQHEA). Phosphoserine occurs at positions 577, 579, and 581.

The protein belongs to the major facilitator superfamily. Phosphate:H(+) symporter (TC 2.A.1.9) family. May function as a monomer. In terms of processing, phosphorylated; phosphorylation increases after phosphate addition to the growth medium. Post-translationally, ubiquitinated in a phosphate-dependent manner; ubiquitination may influence the trafficking of PHO84 to the cell membrane and serve as a signal for endocytosis and internalization.

The protein localises to the cell membrane. The protein resides in the vacuole. It carries out the reaction phosphate(in) + H(+)(in) = phosphate(out) + H(+)(out). The catalysed reaction is Mn(2+)(in) = Mn(2+)(out). The enzyme catalyses Zn(2+)(in) = Zn(2+)(out). It catalyses the reaction Cu(2+)(in) = Cu(2+)(out). It carries out the reaction Co(2+)(in) = Co(2+)(out). Its activity is regulated as follows. Transport activity is inhibited in the presence of the protonophore carbonylcyanide m-chlorophenylhydrazone. Transport activity is inhibited by glycerol-3-phosphate. Transport activity is inhibited by phosphonoacetic acid. Signaling activity is stimulated by glycerol-3-phosphate which acts as a nontransported PHO84 agonist that can trigger PKA signaling. Signaling activity is stimulated by arsenate. Its function is as follows. Proton-coupled high-affinity transporter for external inorganic phosphate. Acts as a transceptor, a membrane protein that in addition to its transporter activity also possesses receptor-like signaling activity; mediates activation of the protein kinase A (PKA) pathway targets during growth induction, triggered by phosphate addition to cells growth-arrested due to previous phosphate starvation. Is not an essential protein, since constitutive, low affinity phosphate transporters exist in yeast. Can function as a low affinity metal transporter that transports manganese, zinc, cobalt and copper. Plays a role in manganese homeostasis predominantly under manganese surplus conditions. The sequence is that of Inorganic phosphate transporter PHO84 (PHO84) from Saccharomyces cerevisiae (strain ATCC 204508 / S288c) (Baker's yeast).